The primary structure comprises 172 residues: RNA pyrophosphohydrolase (172 aa).

In terms of domain architecture, Nudix hydrolase spans 6 to 149 (GFRANVGIII…KRDVYRKVMK (144 aa)). The Nudix box signature appears at 38 to 59 (GGLDDGESVEEAMYRELYEEVG).

The protein belongs to the Nudix hydrolase family. RppH subfamily. The cofactor is a divalent metal cation.

Its function is as follows. Accelerates the degradation of transcripts by removing pyrophosphate from the 5'-end of triphosphorylated RNA, leading to a more labile monophosphorylated state that can stimulate subsequent ribonuclease cleavage. This Shewanella frigidimarina (strain NCIMB 400) protein is RNA pyrophosphohydrolase.